Here is a 319-residue protein sequence, read N- to C-terminus: Cytochrome c biogenesis protein CcsA (319 aa).

Helical transmembrane passes span 9–29 (ILTH…LISL), 48–68 (TFFC…HFPL), 71–91 (LYES…VPYF), 98–118 (LSTI…SGLL), 143–163 (MILG…LLVI), 225–245 (IISL…VWAN), 258–275 (ETWA…LHTR), and 286–306 (AIVA…VNLL).

The protein belongs to the CcmF/CycK/Ccl1/NrfE/CcsA family. In terms of assembly, may interact with Ccs1.

It localises to the plastid. Its subcellular location is the chloroplast thylakoid membrane. Its function is as follows. Required during biogenesis of c-type cytochromes (cytochrome c6 and cytochrome f) at the step of heme attachment. The protein is Cytochrome c biogenesis protein CcsA of Eucalyptus globulus subsp. globulus (Tasmanian blue gum).